Reading from the N-terminus, the 213-residue chain is Lactobacillus shifted protein (213 aa).

Residues 28–38 show a composition bias toward polar residues; the sequence is PRFTENAMQPN. 2 disordered regions span residues 28-56 and 182-213; these read PRFTENAMQPNDPTPRPAKPNVSETDATP and PTSSYPLEPTGAAEEVNENQRVTEGATGYEQR.

In Emericella nidulans (strain FGSC A4 / ATCC 38163 / CBS 112.46 / NRRL 194 / M139) (Aspergillus nidulans), this protein is Lactobacillus shifted protein (lbsA).